The chain runs to 65 residues: Large ribosomal subunit protein uL29 (65 aa).

The protein belongs to the universal ribosomal protein uL29 family.

The chain is Large ribosomal subunit protein uL29 from Buchnera aphidicola subsp. Schizaphis graminum (strain Sg).